We begin with the raw amino-acid sequence, 352 residues long: UDP-N-acetylglucosamine--N-acetylmuramyl-(pentapeptide) pyrophosphoryl-undecaprenol N-acetylglucosamine transferase (352 aa).

UDP-N-acetyl-alpha-D-glucosamine contacts are provided by S195 and Q287.

The protein belongs to the glycosyltransferase 28 family. MurG subfamily.

It localises to the cell membrane. It carries out the reaction Mur2Ac(oyl-L-Ala-gamma-D-Glu-L-Lys-D-Ala-D-Ala)-di-trans,octa-cis-undecaprenyl diphosphate + UDP-N-acetyl-alpha-D-glucosamine = beta-D-GlcNAc-(1-&gt;4)-Mur2Ac(oyl-L-Ala-gamma-D-Glu-L-Lys-D-Ala-D-Ala)-di-trans,octa-cis-undecaprenyl diphosphate + UDP + H(+). Its pathway is cell wall biogenesis; peptidoglycan biosynthesis. Functionally, cell wall formation. Catalyzes the transfer of a GlcNAc subunit on undecaprenyl-pyrophosphoryl-MurNAc-pentapeptide (lipid intermediate I) to form undecaprenyl-pyrophosphoryl-MurNAc-(pentapeptide)GlcNAc (lipid intermediate II). This Streptococcus pneumoniae (strain CGSP14) protein is UDP-N-acetylglucosamine--N-acetylmuramyl-(pentapeptide) pyrophosphoryl-undecaprenol N-acetylglucosamine transferase.